A 116-amino-acid polypeptide reads, in one-letter code: Small ribosomal subunit protein uS11m (116 aa).

Belongs to the universal ribosomal protein uS11 family.

It is found in the mitochondrion. The polypeptide is Small ribosomal subunit protein uS11m (RPS11) (Chondrus crispus (Carrageen Irish moss)).